The chain runs to 24 residues: 33.0 kDa cold shock protein (24 aa).

It belongs to the thaumatin family. Homooligomer; disulfide-linked. In terms of processing, glycosylated.

It is found in the secreted. It localises to the extracellular space. Its subcellular location is the apoplast. This is 33.0 kDa cold shock protein from Arachis hypogaea (Peanut).